A 227-amino-acid polypeptide reads, in one-letter code: PKHD-type hydroxylase Swit_4046 (227 aa).

Residues 78–178 (KVFPPLFNLY…RLCSFFWIQS (101 aa)) enclose the Fe2OG dioxygenase domain. Fe cation is bound by residues histidine 96, aspartate 98, and histidine 159. Arginine 169 contributes to the 2-oxoglutarate binding site.

The cofactor is Fe(2+). It depends on L-ascorbate as a cofactor.

In Rhizorhabdus wittichii (strain DSM 6014 / CCUG 31198 / JCM 15750 / NBRC 105917 / EY 4224 / RW1) (Sphingomonas wittichii), this protein is PKHD-type hydroxylase Swit_4046.